The primary structure comprises 250 residues: tRNA (guanine-N(1)-)-methyltransferase (250 aa).

Residues Gly-115 and 135 to 140 each bind S-adenosyl-L-methionine; that span reads LGDFVL.

This sequence belongs to the RNA methyltransferase TrmD family. Homodimer.

It localises to the cytoplasm. It catalyses the reaction guanosine(37) in tRNA + S-adenosyl-L-methionine = N(1)-methylguanosine(37) in tRNA + S-adenosyl-L-homocysteine + H(+). Its function is as follows. Specifically methylates guanosine-37 in various tRNAs. In Legionella pneumophila (strain Paris), this protein is tRNA (guanine-N(1)-)-methyltransferase.